The sequence spans 424 residues: Keratin, type I cytoskeletal 20 (424 aa).

The head stretch occupies residues 1–69 (MDFSRRSFHR…TGGGDLFVGN (69 aa)). Phosphoserine; by MAPKAPK2, MAPKAPK3 and PKC is present on Ser-13. The segment at 70–105 (EKMAMQNLNDRLASYLEKVRTLEQSNSKLEVQIKQW) is coil 1A. One can recognise an IF rod domain in the interval 70-381 (EKMAMQNLND…RLLEGEDVKT (312 aa)). The linker 1 stretch occupies residues 106 to 123 (YETNAPRAGRDYSAYYRQ). Positions 124–215 (IEELRSQIKD…KEHQEEVDGL (92 aa)) are coil 1B. The linker 12 stretch occupies residues 216–238 (HKHLGNTVNVEVDAAPGLNLGVI). The segment at 239-377 (MNEMRQKYEV…ATYRRLLEGE (139 aa)) is coil 2. The interval 378–424 (DVKTTEYQLSTLEERDIKKTRKIKTVVQEVVDGKVVSSEVKEVEENI) is tail.

Belongs to the intermediate filament family. Heterotetramer of two type I and two type II keratins. Associates with KRT8. In terms of processing, hyperphosphorylation at Ser-13 occurs during the early stages of apoptosis but becomes less prominent during the later stages. Phosphorylation at Ser-13 also increases in response to stress brought on by cell injury. Post-translationally, proteolytically cleaved by caspases during apoptosis. Cleavage occurs at Asp-228. Expressed predominantly in the intestinal epithelium. Expressed in luminal cells of colonic mucosa. Also expressed in the Merkel cells of keratinized oral mucosa; specifically at the tips of some rete ridges of the gingival mucosa, in the basal layer of the palatal mucosa and in the taste buds of lingual mucosa.

The protein resides in the cytoplasm. Functionally, plays a significant role in maintaining keratin filament organization in intestinal epithelia. When phosphorylated, plays a role in the secretion of mucin in the small intestine. The polypeptide is Keratin, type I cytoskeletal 20 (KRT20) (Homo sapiens (Human)).